The following is a 332-amino-acid chain: Ribose-phosphate pyrophosphokinase (332 aa).

ATP-binding positions include 43–45 and 102–103; these read DGE and RQ. Positions 136 and 176 each coordinate Mg(2+). The active site involves Lys-199. D-ribose 5-phosphate-binding positions include Arg-201, Asp-225, and 229–233; that span reads DTGGT.

It belongs to the ribose-phosphate pyrophosphokinase family. Class I subfamily. Homohexamer. Mg(2+) is required as a cofactor.

Its subcellular location is the cytoplasm. It carries out the reaction D-ribose 5-phosphate + ATP = 5-phospho-alpha-D-ribose 1-diphosphate + AMP + H(+). Its pathway is metabolic intermediate biosynthesis; 5-phospho-alpha-D-ribose 1-diphosphate biosynthesis; 5-phospho-alpha-D-ribose 1-diphosphate from D-ribose 5-phosphate (route I): step 1/1. Its function is as follows. Involved in the biosynthesis of the central metabolite phospho-alpha-D-ribosyl-1-pyrophosphate (PRPP) via the transfer of pyrophosphoryl group from ATP to 1-hydroxyl of ribose-5-phosphate (Rib-5-P). In Mycoplasma genitalium (strain ATCC 33530 / DSM 19775 / NCTC 10195 / G37) (Mycoplasmoides genitalium), this protein is Ribose-phosphate pyrophosphokinase.